A 91-amino-acid polypeptide reads, in one-letter code: Large ribosomal subunit protein uL23c (91 aa).

The protein belongs to the universal ribosomal protein uL23 family. Part of the 50S ribosomal subunit.

Its subcellular location is the plastid. It localises to the chloroplast. In terms of biological role, binds to 23S rRNA. The chain is Large ribosomal subunit protein uL23c (rpl23) from Picea abies (Norway spruce).